Reading from the N-terminus, the 258-residue chain is Thiazole synthase (258 aa).

Lys100 (schiff-base intermediate with DXP) is an active-site residue. 1-deoxy-D-xylulose 5-phosphate-binding positions include Gly161, 187-188 (AG), and 209-210 (NT).

This sequence belongs to the ThiG family. As to quaternary structure, homotetramer. Forms heterodimers with either ThiH or ThiS.

It is found in the cytoplasm. The catalysed reaction is [ThiS sulfur-carrier protein]-C-terminal-Gly-aminoethanethioate + 2-iminoacetate + 1-deoxy-D-xylulose 5-phosphate = [ThiS sulfur-carrier protein]-C-terminal Gly-Gly + 2-[(2R,5Z)-2-carboxy-4-methylthiazol-5(2H)-ylidene]ethyl phosphate + 2 H2O + H(+). The protein operates within cofactor biosynthesis; thiamine diphosphate biosynthesis. Catalyzes the rearrangement of 1-deoxy-D-xylulose 5-phosphate (DXP) to produce the thiazole phosphate moiety of thiamine. Sulfur is provided by the thiocarboxylate moiety of the carrier protein ThiS. In vitro, sulfur can be provided by H(2)S. This is Thiazole synthase from Campylobacter jejuni subsp. jejuni serotype O:23/36 (strain 81-176).